The sequence spans 222 residues: UPF0758 protein YicR (222 aa).

One can recognise an MPN domain in the interval P100–I222. The Zn(2+) site is built by H171, H173, and D184. The JAMM motif motif lies at H171–D184.

Belongs to the UPF0758 family. YicR subfamily.

The sequence is that of UPF0758 protein YicR from Escherichia coli (strain K12 / MC4100 / BW2952).